A 338-amino-acid chain; its full sequence is Peptidyl-prolyl cis-trans isomerase cyp11 (338 aa).

The PPIase cyclophilin-type domain maps to 7 to 172 (FFDIDVDGNR…HNVMIANCGE (166 aa)). The segment at 186–338 (ASAVSDESED…RGRFKYRPTY (153 aa)) is disordered. Positions 208–218 (DDSSSDEDSEE) are enriched in acidic residues. Residues 223 to 242 (RTKKKRSRKHSKKDKKKKKR) show a composition bias toward basic residues. The segment covering 243-309 (ESSNRKRSPE…PEKRSSERRV (67 aa)) has biased composition (basic and acidic residues). Residues 329 to 338 (RGRFKYRPTY) show a composition bias toward basic residues.

The protein belongs to the cyclophilin-type PPIase family.

The enzyme catalyses [protein]-peptidylproline (omega=180) = [protein]-peptidylproline (omega=0). Its function is as follows. PPIases accelerate the folding of proteins. It catalyzes the cis-trans isomerization of proline imidic peptide bonds in oligopeptides. The sequence is that of Peptidyl-prolyl cis-trans isomerase cyp11 (cyp11) from Rhizopus delemar (strain RA 99-880 / ATCC MYA-4621 / FGSC 9543 / NRRL 43880) (Mucormycosis agent).